The sequence spans 332 residues: Aquaporin Lacbi1:317173 (332 aa).

The span at 1–20 (MSGQHQITEQSSRNPLSRVS) shows a compositional bias: polar residues. Positions 1 to 45 (MSGQHQITEQSSRNPLSRVSTLLPEKPLSPTSTYAGTQKHPEAPR) are disordered. At 1–66 (MSGQHQITEQ…RNAIRKPMAE (66 aa)) the chain is on the cytoplasmic side. Residues 67-87 (FFGVALLIIFGAGSACQVVLS) traverse the membrane as a helical segment. Topologically, residues 88-100 (TNPDVASSARGSF) are extracellular. A helical membrane pass occupies residues 101 to 121 (LSINFGWAIGIAMGVWVSGGI). The Cytoplasmic segment spans residues 122–144 (SGGHINPAITIAMATYRGFPWRK). The NPA 1 signature appears at 127-129 (NPA). Residues 145–165 (VPSYILAQVLGGVVGAGLVYA) form a helical membrane-spanning segment. Residues 166 to 199 (NYIHAIDIFEGGHHIRTQATASLFATYALPYMTQ) lie on the Extracellular side of the membrane. A helical transmembrane segment spans residues 200–220 (ASCFFSEFLATAVLSMMVFAL). Residues 221–230 (TDKRNHSPTN) lie on the Cytoplasmic side of the membrane. Residues 231 to 251 (GLLPFALFILFVGLGASLGME) form a helical membrane-spanning segment. At 252-283 (TAYALNPARDFGPRLFLAMAGYGKALFNYRSQ) the chain is on the extracellular side. Positions 257 to 259 (NPA) match the NPA 2 motif. Residues 284–304 (YWLWAPIIAPVLGAQAGGLLY) form a helical membrane-spanning segment. Topologically, residues 305–332 (DTFLNDGDNSPIKWRCASSQEHQLAEVV) are cytoplasmic.

The protein belongs to the MIP/aquaporin (TC 1.A.8) family.

The protein localises to the membrane. It catalyses the reaction H2O(in) = H2O(out). The enzyme catalyses NH4(+)(in) = NH4(+)(out). Water channel required to facilitate the transport of water across membranes. Acts as the most efficient Laccaria water channel. In addition to water, also shows strong ammonium transport activity. May be involved in fungal nitrogen (ammonium) support of the plant host in symbiosis. The protein is Aquaporin Lacbi1:317173 of Laccaria bicolor (strain S238N-H82 / ATCC MYA-4686) (Bicoloured deceiver).